A 122-amino-acid chain; its full sequence is Small ribosomal subunit protein uS13 (122 aa).

A disordered region spans residues 95 to 122; that stretch reads GLPVRGQRTHTNARTRKGPAKSIAGKKK.

This sequence belongs to the universal ribosomal protein uS13 family. As to quaternary structure, part of the 30S ribosomal subunit. Forms a loose heterodimer with protein S19. Forms two bridges to the 50S subunit in the 70S ribosome.

Its function is as follows. Located at the top of the head of the 30S subunit, it contacts several helices of the 16S rRNA. In the 70S ribosome it contacts the 23S rRNA (bridge B1a) and protein L5 of the 50S subunit (bridge B1b), connecting the 2 subunits; these bridges are implicated in subunit movement. Contacts the tRNAs in the A and P-sites. In Nitrobacter winogradskyi (strain ATCC 25391 / DSM 10237 / CIP 104748 / NCIMB 11846 / Nb-255), this protein is Small ribosomal subunit protein uS13.